The chain runs to 229 residues: Ribonuclease 3 (229 aa).

The RNase III domain occupies 5–127 (LARLERKLGY…LIGAIYLDAD (123 aa)). Mg(2+) is bound at residue Glu40. Asp44 is a catalytic residue. Positions 113 and 116 each coordinate Mg(2+). Glu116 is an active-site residue. A DRBM domain is found at 154–224 (DPKTRLQEFL…AASALIALGV (71 aa)).

It belongs to the ribonuclease III family. Homodimer. Mg(2+) serves as cofactor.

Its subcellular location is the cytoplasm. It catalyses the reaction Endonucleolytic cleavage to 5'-phosphomonoester.. Its function is as follows. Digests double-stranded RNA. Involved in the processing of primary rRNA transcript to yield the immediate precursors to the large and small rRNAs (23S and 16S). Processes some mRNAs, and tRNAs when they are encoded in the rRNA operon. Processes pre-crRNA and tracrRNA of type II CRISPR loci if present in the organism. This Pseudomonas putida (strain GB-1) protein is Ribonuclease 3.